Consider the following 345-residue polypeptide: Dense granule protein 4 (345 aa).

The N-terminal stretch at methionine 1–glycine 20 is a signal peptide. Polar residues predominate over residues serine 227–threonine 251. The interval serine 227 to lysine 271 is disordered. The helical transmembrane segment at isoleucine 276–valine 296 threads the bilayer. A disordered region spans residues glycine 298–glutamate 345. The segment covering arginine 321 to serine 330 has biased composition (pro residues). The span at leucine 335–glutamate 345 shows a compositional bias: basic and acidic residues.

O-glycosylated.

The protein resides in the secreted. Its subcellular location is the parasitophorous vacuole lumen. The protein localises to the parasitophorous vacuole membrane. It localises to the cytoplasmic vesicle. It is found in the secretory vesicle. Major granular component involved in excreted-secreted antigen (ESA) immunity. The protein is Dense granule protein 4 (GRA4) of Toxoplasma gondii.